Reading from the N-terminus, the 78-residue chain is MSRICQVTGKKPMVGNTVSHANNKGKRRFLPNIQEHRFWVQSENRFITLKVSAHGMRIIDKKGIDAVLAQMRARGEKI.

Belongs to the bacterial ribosomal protein bL28 family.

This chain is Large ribosomal subunit protein bL28, found in Dichelobacter nodosus (strain VCS1703A).